The chain runs to 59 residues: Chromatin protein Cren7 (59 aa).

It belongs to the Cren7 family. In terms of assembly, monomer. Post-translationally, methylated at multiple sites, to varying extents.

It is found in the chromosome. The protein localises to the cytoplasm. Its function is as follows. A chromatin protein, binds double-stranded DNA without sequence specificity. Constrains negative DNA supercoils. The protein is Chromatin protein Cren7 of Pyrobaculum aerophilum (strain ATCC 51768 / DSM 7523 / JCM 9630 / CIP 104966 / NBRC 100827 / IM2).